The primary structure comprises 448 residues: Probable glycine dehydrogenase (decarboxylating) subunit 1 (448 aa).

The protein belongs to the GcvP family. N-terminal subunit subfamily. The glycine cleavage system is composed of four proteins: P, T, L and H. In this organism, the P 'protein' is a heterodimer of two subunits.

The catalysed reaction is N(6)-[(R)-lipoyl]-L-lysyl-[glycine-cleavage complex H protein] + glycine + H(+) = N(6)-[(R)-S(8)-aminomethyldihydrolipoyl]-L-lysyl-[glycine-cleavage complex H protein] + CO2. Its function is as follows. The glycine cleavage system catalyzes the degradation of glycine. The P protein binds the alpha-amino group of glycine through its pyridoxal phosphate cofactor; CO(2) is released and the remaining methylamine moiety is then transferred to the lipoamide cofactor of the H protein. This Staphylococcus aureus (strain USA300) protein is Probable glycine dehydrogenase (decarboxylating) subunit 1.